The following is a 585-amino-acid chain: Putative phospholipase B-like 2 (585 aa).

An N-terminal signal peptide occupies residues 1 to 35 (MAAPMDRTHGGRAARALRRALALASLAGLLLSGLA). N-linked (GlcNAc...) asparagine glycosylation is found at N84, N102, and N106. C138 and C148 are joined by a disulfide. N227 and N432 each carry an N-linked (GlcNAc...) asparagine glycan. A disulfide bridge connects residues C488 and C491. N511 carries an N-linked (GlcNAc...) asparagine glycan.

This sequence belongs to the phospholipase B-like family. As to quaternary structure, interacts with IGF2R. Glycosylated; contains mannose 6-phosphate sugars.

It is found in the lysosome lumen. Functionally, putative phospholipase. The chain is Putative phospholipase B-like 2 (Plbd2) from Rattus norvegicus (Rat).